The chain runs to 155 residues: cAMP-dependent protein kinase type II-alpha regulatory subunit (155 aa).

Positions 1–34 (SGSQDLEPSSGLVTDAIADSESEDDEDLDVPIPS) are disordered. Positions 1–81 (SGSQDLEPSS…LQEACKDILL (81 aa)) are dimerization and phosphorylation. A compositionally biased stretch (acidic residues) spans 18 to 29 (ADSESEDDEDLD). Residues Ser-20 and Ser-22 each carry the phosphoserine modification. Ser-41 carries the phosphoserine; by PKA modification. 3',5'-cyclic AMP is bound by residues 82–155 (FKNL…ALMY) and Glu-150.

It belongs to the cAMP-dependent kinase regulatory chain family. In terms of assembly, the inactive form of the enzyme is composed of two regulatory chains and two catalytic chains. Activation by cAMP produces two active catalytic monomers and a regulatory dimer that binds four cAMP molecules. Interacts with AKAP4 and CBFA2T3. Interacts with the phosphorylated form of PJA2. Interacts with MYRIP; this interaction may link PKA to components of the exocytosis machinery, thus facilitating exocytosis, including insulin release. Forms a complex composed of PRKAR2A, GSK3B and GSKIP through GSKIP interaction; facilitates PKA-induced phosphorylation and regulates GSK3B activity. Interacts with ADCY8; inhibits adenylate cyclase activity through PKA phosphorylation. Phosphorylated by the activated catalytic chain. As to expression, four types of regulatory chains are found: I-alpha, I-beta, II-alpha, and II-beta. Their expression varies among tissues and is in some cases constitutive and in others inducible.

The protein localises to the cytoplasm. The protein resides in the cell membrane. Its function is as follows. Regulatory subunit of the cAMP-dependent protein kinases involved in cAMP signaling in cells. Type II regulatory chains mediate membrane association by binding to anchoring proteins, including the MAP2 kinase. The sequence is that of cAMP-dependent protein kinase type II-alpha regulatory subunit (PRKAR2A) from Sus scrofa (Pig).